We begin with the raw amino-acid sequence, 172 residues long: Large ribosomal subunit protein uL10 (172 aa).

The protein belongs to the universal ribosomal protein uL10 family. Part of the ribosomal stalk of the 50S ribosomal subunit. The N-terminus interacts with L11 and the large rRNA to form the base of the stalk. The C-terminus forms an elongated spine to which L12 dimers bind in a sequential fashion forming a multimeric L10(L12)X complex.

In terms of biological role, forms part of the ribosomal stalk, playing a central role in the interaction of the ribosome with GTP-bound translation factors. This is Large ribosomal subunit protein uL10 from Francisella tularensis subsp. tularensis (strain FSC 198).